We begin with the raw amino-acid sequence, 810 residues long: Transitional endoplasmic reticulum ATPase homolog 2 (810 aa).

Residues 252–258, Asn353, His389, and 526–531 contribute to the ATP site; these read PGTGKTL and GCGKTL. The segment covering 713 to 727 has biased composition (basic and acidic residues); the sequence is RQEKERQDRSARGEE. Disordered regions lie at residues 713 to 732 and 777 to 810; these read RQEK…MEDE and FGNN…DLYN. Gly residues predominate over residues 793 to 802; the sequence is PVGGNGGSGG. An interaction with ufd-2 region spans residues 805–810; it reads DDDLYN.

Belongs to the AAA ATPase family. CDC48 subfamily. In terms of assembly, homohexamer; oligomerization is ATP-independent. Forms a ring-shaped particle of 18.3 nm diameter, that displays 6-fold radial symmetry. Interacts with cdc-48.1 and thus may form heterohexamers. Forms a complex composed of ubxn-3, cdc-48.1 and/or cdc-48.2 and substrate cdt-1. Interacts (via N-terminus) with ubxn-3. Interacts (via N-terminus) with atx-3 (via RRDR motif). Interacts (via N-terminus) with ubxn-5. Interacts with ufd-1. Interacts (via DDDLYN motif) with ufd-2. Interacts (via N-terminus) with ubxn-1. Interacts (via N-terminus) with ubxn-2. Interacts (via N-terminus) with ubxn-4. Interacts with ubxn-6. In terms of tissue distribution, expressed in body wall muscles.

The protein localises to the cytoplasm. It carries out the reaction ATP + H2O = ADP + phosphate + H(+). With respect to regulation, the first ATP-binding region has low ATPase activity. The second ATP-binding region is responsible for ATPase activity. ATP binding to the first ATP-binding region induces intrinsic activity of the second ATP-binding region. While ATP binding to the first ATP-binding region appears to prevent ATP hydrolysis by the second ATP-binding region, ADP-binding to first region promotes the coordinate and cooperative ATPase cycle of the second ATP-binding region. ATP binding to the first ATP-binding region induces a conformational change, promoting the rotation of the first ATP-binding region relative to the second ATP-binding region in the hexamer. Inhibited by N-ethylmaleimide (NEM). ATP-dependent chaperone which probably uses the energy provided by ATP hydrolysis to generate mechanical force to unfold substrate proteins, disassemble protein complexes, and disaggregate protein aggregates. However, able to prevent aggregation of unfolded proteins also in an ATP-independent manner. Targets polyubiquitinated proteins for proteasomal degradation by binding to 'Lys-48'-linked polyubiquitin chains. Involved in the cytoplasmic elimination of misfolded proteins exported from the ER. This pathway, known as ERAD, prevents the activation of the unfolded protein response (UPR) caused by the accumulation of misfolded proteins in the ER. Together with udf-2 and chn-1, regulates myosin assembly in body wall muscles by targeting myosin chaperone unc-45 for proteasomal degradation. During oocyte meiosis and together with cdc-48.1, required for chromosome condensation at the diakinesis phase in prophase I and for progression of metaphase I. During the first embryonic cell division, regulates DNA replication and thus chromosome segregation and decondensation, and nuclear envelope re-assembly. In S phase and in association with ufd-1, npl-4.1 and/or npl-4.2 and ubxn-3, ensures the degradation of DNA licensing factor cdt-1 after the initiation of DNA replication and thus the disassembly of the DNA replication CMG helicase complex by promoting the dissociation from chromatin of several of its components including cdc-45 and sld-5. Regulates ubxn-3 nuclear localization during S phase. During the first embryonic cell divisions and together with cdc-48.1, regulates the re-assembly of the nuclear envelope after mitosis possibly by inactivating kinase air-2, a component of the chromosomal passenger complex (CPC). The polypeptide is Transitional endoplasmic reticulum ATPase homolog 2 (cdc-48.2) (Caenorhabditis elegans).